A 183-amino-acid chain; its full sequence is Capsid protein (183 aa).

The disordered stretch occupies residues 136-183 (NAPILSTLPETTVVRRRGRSPRRRTPSPRRRRSQSPRRRRSQSRESQC). The span at 149–176 (VRRRGRSPRRRTPSPRRRRSQSPRRRRS) shows a compositional bias: basic residues. Ser-155, Ser-162, and Ser-170 each carry phosphoserine; by host. One copy of the 1; half-length repeat lies at 155–161 (SPRRRTP). Residues 155–177 (SPRRRTPSPRRRRSQSPRRRRSQ) are 3 X 8 AA repeats of S-P-R-R-R-[PR]-S-Q. Positions 158-175 (RRTPSPRRRRSQSPRRRR) match the Bipartite nuclear localization signal motif. 2 tandem repeats follow at residues 162-169 (SPRRRRSQ) and 170-177 (SPRRRRSQ). The tract at residues 177–183 (QSRESQC) is RNA binding.

This sequence belongs to the orthohepadnavirus core antigen family. As to quaternary structure, homodimerizes, then multimerizes. Interacts with cytosol exposed regions of viral L glycoprotein present in the reticulum-to-Golgi compartment. Interacts with human FLNB. Phosphorylated form interacts with host importin alpha; this interaction depends on the exposure of the NLS, which itself depends upon genome maturation and/or phosphorylation of the capsid protein. Interacts with host NUP153. In terms of processing, phosphorylated by host SRPK1, SRPK2, and maybe protein kinase C or GAPDH. Phosphorylation is critical for pregenomic RNA packaging. Protein kinase C phosphorylation is stimulated by HBx protein and may play a role in transport of the viral genome to the nucleus at the late step during the viral replication cycle.

It is found in the virion. The protein localises to the host cytoplasm. Its function is as follows. Self assembles to form an icosahedral capsid. Most capsids appear to be large particles with an icosahedral symmetry of T=4 and consist of 240 copies of capsid protein, though a fraction forms smaller T=3 particles consisting of 180 capsid proteins. Entering capsids are transported along microtubules to the nucleus. Phosphorylation of the capsid is thought to induce exposure of nuclear localization signal in the C-terminal portion of the capsid protein that allows binding to the nuclear pore complex via the importin (karyopherin-) alpha and beta. Capsids are imported in intact form through the nuclear pore into the nuclear basket, where it probably binds NUP153. Only capsids that contain the mature viral genome can release the viral DNA and capsid protein into the nucleoplasm. Immature capsids get stuck in the basket. Capsids encapsulate the pre-genomic RNA and the P protein. Pre-genomic RNA is reverse-transcribed into DNA while the capsid is still in the cytoplasm. The capsid can then either be directed to the nucleus, providing more genomes for transcription, or bud through the endoplasmic reticulum to provide new virions. This is Capsid protein from Homo sapiens (Human).